The following is a 1409-amino-acid chain: MAP kinase-activating death domain protein (1409 aa).

In terms of domain architecture, uDENN spans 26–230; sequence RGASQSSPDA…VPVPGKTKVQ (205 aa). Positions 251 to 390 constitute a cDENN domain; that stretch reads RFTLIDFPLH…DATHLKERLK (140 aa). In terms of domain architecture, dDENN spans 392-496; the sequence is AINKMTTMTV…ECCLCPKNET (105 aa). 4 disordered regions span residues 654-701, 761-784, 902-1008, and 1015-1034; these read SFDH…MKGL, QHIV…QSKN, SSSA…KVKT, and PQNL…SFLA. 2 stretches are compositionally biased toward polar residues: residues 680–691 and 761–772; these read SDASDTPTSRGS and QHIVRSKTQPNP. Composition is skewed to low complexity over residues 773-784 and 902-913; these read TSQQTANQQSKN and SSSAPSTMTTPS. Residues 915 to 925 are compositionally biased toward basic and acidic residues; the sequence is HSNDILKESRP. Residues 941–961 are compositionally biased toward polar residues; that stretch reads LGQNVTPTSTNNHEIAQSTRS. The segment covering 963–1003 has biased composition (pro residues); the sequence is ALPPPVPPREAPPIPKRNPPPLGAPPKVPEGARAPPPLPPR. The segment covering 1020–1031 has biased composition (low complexity); the sequence is PNNQPAQPSSPS. The Death domain maps to 1109 to 1184; the sequence is GMDQEPSEMI…GLVCSKEINK (76 aa).

The protein belongs to the MADD family. Interacts with cab-1. As to expression, expressed in nearly all neurons.

It localises to the cell membrane. Its subcellular location is the cytoplasm. Its function is as follows. Guanyl-nucleotide exchange factor that regulates small GTPases. Converts GDP-bound inactive form of rab-3 and cab-1 to the GTP-bound active forms. Regulator of presynaptic activity that interacts with rab-3 to regulate synaptic vesicle release. Is also a regulator of the cab-1 synaptic transmission pathway. Probably by converting rab-3 to its GTP-bound active form, plays a role in the recruitment of endophilin unc-57 to synaptic vesicles. Probably by activating rab-3 and thus regulating the trafficking of dense-core vesicles, plays a role in AVG neuron-mediated formation of the right axon tract of the ventral nerve cord. Regulates anterior body muscle contractions (aBOC) and the expulsion steps during the defecation motor program (DMP). Probably by regulating DMP, required for fatty acid uptake by intestinal cells. This Caenorhabditis elegans protein is MAP kinase-activating death domain protein (aex-3).